Reading from the N-terminus, the 422-residue chain is Tyrosine--tRNA ligase (422 aa).

L-tyrosine is bound at residue Tyr34. Residues 39–48 (PTEDSLHVGH) carry the 'HIGH' region motif. The L-tyrosine site is built by Tyr172 and Gln176. A 'KMSKS' region motif is present at residues 232–236 (KFGKT). Lys235 lines the ATP pocket. One can recognise an S4 RNA-binding domain in the interval 354-412 (KDLQEALVLSSLAQSRTQAKNMIISNSISINTKKIVNKNYIIDDNDKLFNQFTLLSRGK).

This sequence belongs to the class-I aminoacyl-tRNA synthetase family. TyrS type 1 subfamily. In terms of assembly, homodimer.

It is found in the cytoplasm. The enzyme catalyses tRNA(Tyr) + L-tyrosine + ATP = L-tyrosyl-tRNA(Tyr) + AMP + diphosphate + H(+). Catalyzes the attachment of tyrosine to tRNA(Tyr) in a two-step reaction: tyrosine is first activated by ATP to form Tyr-AMP and then transferred to the acceptor end of tRNA(Tyr). In Buchnera aphidicola subsp. Schizaphis graminum (strain Sg), this protein is Tyrosine--tRNA ligase.